Reading from the N-terminus, the 317-residue chain is tRNA-dihydrouridine(20a/20b) synthase [NAD(P)+]-like (317 aa).

FMN is bound by residues Pro33–Val35 and Gln87. Residue Cys116 is the Proton donor of the active site. FMN is bound by residues Lys158, His186, Asn216–Asp218, and Ala240–Arg241.

It belongs to the Dus family. Dus4 subfamily. The cofactor is FMN.

The catalysed reaction is 5,6-dihydrouridine(20a) in tRNA + NADP(+) = uridine(20a) in tRNA + NADPH + H(+). It catalyses the reaction 5,6-dihydrouridine(20a) in tRNA + NAD(+) = uridine(20a) in tRNA + NADH + H(+). The enzyme catalyses 5,6-dihydrouridine(20b) in tRNA + NAD(+) = uridine(20b) in tRNA + NADH + H(+). It carries out the reaction 5,6-dihydrouridine(20b) in tRNA + NADP(+) = uridine(20b) in tRNA + NADPH + H(+). Functionally, catalyzes the synthesis of dihydrouridine, a modified base found in the D-loop of most tRNAs. The protein is tRNA-dihydrouridine(20a/20b) synthase [NAD(P)+]-like (DUS4L) of Homo sapiens (Human).